Here is a 357-residue protein sequence, read N- to C-terminus: DNA replication and repair protein RecF (357 aa).

Residue 30-37 coordinates ATP; it reads GANGSGKT.

The protein belongs to the RecF family.

Its subcellular location is the cytoplasm. Its function is as follows. The RecF protein is involved in DNA metabolism; it is required for DNA replication and normal SOS inducibility. RecF binds preferentially to single-stranded, linear DNA. It also seems to bind ATP. This is DNA replication and repair protein RecF from Salmonella arizonae (strain ATCC BAA-731 / CDC346-86 / RSK2980).